We begin with the raw amino-acid sequence, 438 residues long: Enolase (438 aa).

Gln174 contributes to the (2R)-2-phosphoglycerate binding site. The active-site Proton donor is the Glu216. Positions 253, 297, and 324 each coordinate Mg(2+). (2R)-2-phosphoglycerate contacts are provided by Lys349, Arg378, Ser379, and Lys400. Lys349 serves as the catalytic Proton acceptor.

Belongs to the enolase family. As to quaternary structure, component of the RNA degradosome, a multiprotein complex involved in RNA processing and mRNA degradation. It depends on Mg(2+) as a cofactor.

The protein localises to the cytoplasm. The protein resides in the secreted. Its subcellular location is the cell surface. The catalysed reaction is (2R)-2-phosphoglycerate = phosphoenolpyruvate + H2O. It functions in the pathway carbohydrate degradation; glycolysis; pyruvate from D-glyceraldehyde 3-phosphate: step 4/5. Functionally, catalyzes the reversible conversion of 2-phosphoglycerate (2-PG) into phosphoenolpyruvate (PEP). It is essential for the degradation of carbohydrates via glycolysis. The polypeptide is Enolase (Psychrobacter sp. (strain PRwf-1)).